The primary structure comprises 633 residues: Putative ankyrin repeat protein L774 (633 aa).

ANK repeat units follow at residues 91–120, 123–152, 221–250, 252–275, 338–367, 369–393, and 517–546; these read IYGH…EYDP, NCDD…FFKI, NVNK…EYDF, TILK…ILDS, DYDV…DVNN, MTYA…TLST, and DNLK…NSND.

The polypeptide is Putative ankyrin repeat protein L774 (Acanthamoeba polyphaga mimivirus (APMV)).